The following is a 151-amino-acid chain: uncharacterized protein (151 aa).

The segment at 1-48 is disordered; the sequence is MRMAPTESTEGRRLWPGPREGGSGKETTSEKLSNLPRPHSYSPKRADA.

This is an uncharacterized protein from Homo sapiens (Human).